Reading from the N-terminus, the 649-residue chain is 1-deoxy-D-xylulose-5-phosphate synthase 1 (649 aa).

Residues His-79 and 120–122 (AHS) contribute to the thiamine diphosphate site. Asp-151 contacts Mg(2+). Thiamine diphosphate is bound by residues 152–153 (GS), Asn-180, Tyr-289, and Glu-371. Asn-180 is a binding site for Mg(2+).

This sequence belongs to the transketolase family. DXPS subfamily. As to quaternary structure, homodimer. It depends on Mg(2+) as a cofactor. The cofactor is thiamine diphosphate.

The catalysed reaction is D-glyceraldehyde 3-phosphate + pyruvate + H(+) = 1-deoxy-D-xylulose 5-phosphate + CO2. It participates in metabolic intermediate biosynthesis; 1-deoxy-D-xylulose 5-phosphate biosynthesis; 1-deoxy-D-xylulose 5-phosphate from D-glyceraldehyde 3-phosphate and pyruvate: step 1/1. In terms of biological role, catalyzes the acyloin condensation reaction between C atoms 2 and 3 of pyruvate and glyceraldehyde 3-phosphate to yield 1-deoxy-D-xylulose-5-phosphate (DXP). The polypeptide is 1-deoxy-D-xylulose-5-phosphate synthase 1 (Zymomonas mobilis subsp. mobilis (strain ATCC 31821 / ZM4 / CP4)).